The following is a 271-amino-acid chain: Aquaporin-11 (271 aa).

Residues 1–14 are Cytoplasmic-facing; that stretch reads MSALLGLPPEVQDT. Residues 15–35 form a helical membrane-spanning segment; it reads CISLGLMLLVVLFMGLARVIA. The Lumenal portion of the chain corresponds to 36–41; that stretch reads RQQLHR. The chain crosses the membrane as a helical span at residues 42–62; it reads PMVHAFVLEFLATFQLCYCTH. The Cytoplasmic segment spans residues 63-76; that stretch reads ELQLLSEQDSGHPT. The helical transmembrane segment at 77–97 threads the bilayer; the sequence is WTLTLIYFFSLVHGLTLVGTA. The Lumenal segment spans residues 98–166; that stretch reads SNPCGVMMQM…NPINTDISKA (69 aa). The NPC signature appears at 99-101; sequence NPC. Residues 167-187 traverse the membrane as a helical segment; sequence IIIEAICSFIFHSALLHFQEV. Over 188–194 the chain is Cytoplasmic; the sequence is RTKLRIH. Residues 195-215 traverse the membrane as a helical segment; the sequence is VLAALITFLAYAGGSLTGALF. Residues 216-218 carry the NPA motif; sequence NPA. Over 216 to 234 the chain is Lumenal; sequence NPALALSLHFPCFDESFYK. Residues 235–255 form a helical membrane-spanning segment; it reads FFVVYWVAPSLGVLLMILMFS. At 256–271 the chain is on the cytoplasmic side; sequence FFLPWLHNNQLSNKKE.

The protein belongs to the MIP/aquaporin (TC 1.A.8) family. AQP11/AQP12 subfamily. As to quaternary structure, homodimer; disulfide-linked. Homotetramer. Can also form homomultimer. Post-translationally, not glycosylated. Expressed in retina specifically at retinal Mueller glial cells. Expressed in adult testis, in the elongated spermatids (ES) and in residual bodies inside Sertoli cells.

It is found in the endoplasmic reticulum membrane. The protein resides in the cytoplasmic vesicle membrane. It localises to the cell membrane. It carries out the reaction H2O(in) = H2O(out). The catalysed reaction is glycerol(in) = glycerol(out). It catalyses the reaction H2O2(out) = H2O2(in). In terms of biological role, channel protein that facilitates the transport of water, glycerol and hydrogen peroxide across membrane of cell or organelles guaranteeing intracellular homeostasis in several organes like liver, kidney and brain. In situation of stress, participates in endoplasmic reticulum (ER) homeostasis by regulating redox homeostasis through the transport of hydrogen peroxide across the endoplasmic reticulum membrane thereby regulating the oxidative stress through the NADPH oxidase 2 pathway. Plays a role by maintaining an environment suitable for translation or protein foldings in the ER lumen namely by participating in the PKD1 glycosylation processing resulting in regulation of PKD1 membrane trafficking thereby preventing the accumulation of unfolding protein in ER. Plays a role in the proximal tubule function by regulating its endosomal acidification. May play a role in postnatal kidney development. The chain is Aquaporin-11 from Rattus norvegicus (Rat).